A 515-amino-acid chain; its full sequence is Maturase K (515 aa).

The protein belongs to the intron maturase 2 family. MatK subfamily.

The protein localises to the plastid. The protein resides in the chloroplast. In terms of biological role, usually encoded in the trnK tRNA gene intron. Probably assists in splicing its own and other chloroplast group II introns. The protein is Maturase K of Pinus halepensis (Aleppo pine).